We begin with the raw amino-acid sequence, 366 residues long: Chorismate synthase (366 aa).

Residues arginine 48 and arginine 54 each contribute to the NADP(+) site. Residues 125–127, 238–239, glycine 278, 293–297, and arginine 319 each bind FMN; these read RSS, NA, and KPTSS.

Belongs to the chorismate synthase family. In terms of assembly, homotetramer. It depends on FMNH2 as a cofactor.

The catalysed reaction is 5-O-(1-carboxyvinyl)-3-phosphoshikimate = chorismate + phosphate. It functions in the pathway metabolic intermediate biosynthesis; chorismate biosynthesis; chorismate from D-erythrose 4-phosphate and phosphoenolpyruvate: step 7/7. Functionally, catalyzes the anti-1,4-elimination of the C-3 phosphate and the C-6 proR hydrogen from 5-enolpyruvylshikimate-3-phosphate (EPSP) to yield chorismate, which is the branch point compound that serves as the starting substrate for the three terminal pathways of aromatic amino acid biosynthesis. This reaction introduces a second double bond into the aromatic ring system. The polypeptide is Chorismate synthase (Paraburkholderia xenovorans (strain LB400)).